The primary structure comprises 102 residues: Small ribosomal subunit protein uS10 (102 aa).

The protein belongs to the universal ribosomal protein uS10 family. As to quaternary structure, part of the 30S ribosomal subunit.

Functionally, involved in the binding of tRNA to the ribosomes. The polypeptide is Small ribosomal subunit protein uS10 (Lactococcus lactis subsp. lactis (strain IL1403) (Streptococcus lactis)).